The following is a 238-amino-acid chain: 2,3,4,5-tetrahydropyridine-2,6-dicarboxylate N-acetyltransferase (238 aa).

It belongs to the transferase hexapeptide repeat family. DapH subfamily.

It carries out the reaction (S)-2,3,4,5-tetrahydrodipicolinate + acetyl-CoA + H2O = L-2-acetamido-6-oxoheptanedioate + CoA. It functions in the pathway amino-acid biosynthesis; L-lysine biosynthesis via DAP pathway; LL-2,6-diaminopimelate from (S)-tetrahydrodipicolinate (acetylase route): step 1/3. In terms of biological role, catalyzes the transfer of an acetyl group from acetyl-CoA to tetrahydrodipicolinate. This chain is 2,3,4,5-tetrahydropyridine-2,6-dicarboxylate N-acetyltransferase, found in Thermotoga neapolitana (strain ATCC 49049 / DSM 4359 / NBRC 107923 / NS-E).